Consider the following 211-residue polypeptide: Transcription antitermination protein NusB (211 aa).

Residues 152–211 (PAKKERVANPFPSTPPKKPENVPNPFSTPFKKNSSEPIRNPFEGNKSPQPPQKTLRRKKK) are disordered. Over residues 175-188 (NPFSTPFKKNSSEP) the composition is skewed to polar residues.

This sequence belongs to the NusB family.

Its function is as follows. Involved in transcription antitermination. Required for transcription of ribosomal RNA (rRNA) genes. Binds specifically to the boxA antiterminator sequence of the ribosomal RNA (rrn) operons. The sequence is that of Transcription antitermination protein NusB from Chloroherpeton thalassium (strain ATCC 35110 / GB-78).